The primary structure comprises 467 residues: 6-phosphogluconate dehydrogenase, decarboxylating (467 aa).

NADP(+) contacts are provided by residues Gly9–Gly14, Asn32–Thr34, Val73–Ala75, and Asn101. Substrate is bound by residues Asn101 and Ser127–Gly129. Residue Lys181 is the Proton acceptor of the active site. His184–Asn185 serves as a coordination point for substrate. The active-site Proton donor is the Glu188. Residues Tyr189, Lys259, Arg286, and His451 each coordinate substrate.

The protein belongs to the 6-phosphogluconate dehydrogenase family. As to quaternary structure, homodimer.

It catalyses the reaction 6-phospho-D-gluconate + NADP(+) = D-ribulose 5-phosphate + CO2 + NADPH. The protein operates within carbohydrate degradation; pentose phosphate pathway; D-ribulose 5-phosphate from D-glucose 6-phosphate (oxidative stage): step 3/3. Functionally, catalyzes the oxidative decarboxylation of 6-phosphogluconate to ribulose 5-phosphate and CO(2), with concomitant reduction of NADP to NADPH. The polypeptide is 6-phosphogluconate dehydrogenase, decarboxylating (gntZ) (Bacillus licheniformis).